Consider the following 142-residue polypeptide: Peptide methionine sulfoxide reductase MsrB (142 aa).

Residues 2–125 form the MsrB domain; it reads LKKDKSELTD…NSAAIQFIPY (124 aa). The active-site Nucleophile is Cys-114.

This sequence belongs to the MsrB Met sulfoxide reductase family.

The catalysed reaction is L-methionyl-[protein] + [thioredoxin]-disulfide + H2O = L-methionyl-(R)-S-oxide-[protein] + [thioredoxin]-dithiol. The polypeptide is Peptide methionine sulfoxide reductase MsrB (Staphylococcus aureus (strain Mu3 / ATCC 700698)).